Reading from the N-terminus, the 116-residue chain is Large ribosomal subunit protein bL17 (116 aa).

It belongs to the bacterial ribosomal protein bL17 family. As to quaternary structure, part of the 50S ribosomal subunit. Contacts protein L32.

This is Large ribosomal subunit protein bL17 from Synechococcus sp. (strain RCC307).